A 157-amino-acid polypeptide reads, in one-letter code: Putative glutathione-dependent formaldehyde-activating enzyme (157 aa).

The region spanning 3–134 (LEGSCHCGAV…WVEIESREQD (132 aa)) is the CENP-V/GFA domain. Zn(2+) is bound by residues cysteine 7, cysteine 9, cysteine 27, cysteine 29, cysteine 32, cysteine 79, and cysteine 82.

The protein belongs to the Gfa family. It depends on Zn(2+) as a cofactor.

It catalyses the reaction S-(hydroxymethyl)glutathione = glutathione + formaldehyde. It participates in one-carbon metabolism; formaldehyde degradation; formate from formaldehyde (glutathione route): step 1/3. Catalyzes the condensation of formaldehyde and glutathione to S-hydroxymethylglutathione. The protein is Putative glutathione-dependent formaldehyde-activating enzyme of Halomonas elongata (strain ATCC 33173 / DSM 2581 / NBRC 15536 / NCIMB 2198 / 1H9).